Consider the following 427-residue polypeptide: MSSIVVVGTQWGDEGKGKITDFLAEQADVIARFSGGNNAGHTIQFGGETYKLHLVPSGIFYKDKLAVIGNGVVVDPVALLKELDGLNERGISTDNLRISNRAQVILPYHLAQDEYEERRRGDNKIGTTKKGIGPAYVDKAQRIGIRMADLLEKETFERRLKENIEYKNAYFKGMFNETCPTFDEIFDEYYAAGQRLKDYVTDTAKILDDANVADEKVLFEGAQGVMLDIDHGTYPFVTSSNPVAGNVTVGTGVGPTSVSKVIGVCKSYTSRVGDGPFPTELFDEDGHHIREVGREYGTTTGRPRRVGWFDSVVLRHSRRVSGITDLSINSIDVLTGLDTVKICTAYELDGEKITEYPANLDQLRRCKPIFEELPGWTEDITGCRSLDELPENARNYLERISELCGVHISIFSVGPDREQTNLLEQLW.

Residues 12 to 18 (GDEGKGK) and 40 to 42 (GHT) each bind GTP. Catalysis depends on Asp-13, which acts as the Proton acceptor. 2 residues coordinate Mg(2+): Asp-13 and Gly-40. IMP-binding positions include 13–16 (DEGK), 38–41 (NAGH), Thr-128, Arg-142, Gln-223, Thr-238, and Arg-302. Residue His-41 is the Proton donor of the active site. Residue 298 to 304 (TTTGRPR) coordinates substrate. GTP is bound by residues Arg-304, 330-332 (SID), and 412-414 (SVG).

Belongs to the adenylosuccinate synthetase family. As to quaternary structure, homodimer. It depends on Mg(2+) as a cofactor.

It localises to the cytoplasm. The catalysed reaction is IMP + L-aspartate + GTP = N(6)-(1,2-dicarboxyethyl)-AMP + GDP + phosphate + 2 H(+). It participates in purine metabolism; AMP biosynthesis via de novo pathway; AMP from IMP: step 1/2. Its function is as follows. Plays an important role in the de novo pathway of purine nucleotide biosynthesis. Catalyzes the first committed step in the biosynthesis of AMP from IMP. The chain is Adenylosuccinate synthetase from Staphylococcus epidermidis (strain ATCC 35984 / DSM 28319 / BCRC 17069 / CCUG 31568 / BM 3577 / RP62A).